The following is a 175-amino-acid chain: Anterior gradient protein 2 homolog (175 aa).

An N-terminal signal peptide occupies residues 1–20; that stretch reads MEKFSVSAILLLVAISGTLA. Residues 21-40 form a required to promote cell adhesion region; it reads KDTTVKSGAKKDPKDSRPKL. The disordered stretch occupies residues 24–44; it reads TVKSGAKKDPKDSRPKLPQTL. Residues 29-38 show a composition bias toward basic and acidic residues; that stretch reads AKKDPKDSRP. 2 short sequence motifs (homodimer stabilization; interchain) span residues 45-54 and 60-67; these read SRGWGDQLIW and EALYRSKT.

The protein belongs to the AGR family. In terms of assembly, monomer and homodimer. Interacts with LYPD3 and DAG1 (alphaDAG1). Interacts with MUC2; disulfide-linked. Expressed in lung, skeletal muscle, testis, liver, stomach, colon, small intestine, the goblet cells of the intestine and the mucuous neck cells of the stomach.

Its subcellular location is the secreted. It is found in the endoplasmic reticulum. Functionally, required for MUC2 post-transcriptional synthesis and secretion. May play a role in the production of mucus by intestinal cells. Proto-oncogene that may play a role in cell migration, cell differentiation and cell growth. Promotes cell adhesion. The chain is Anterior gradient protein 2 homolog (Agr2) from Mus musculus (Mouse).